The following is a 469-amino-acid chain: Glutamate--tRNA ligase (469 aa).

Positions 11 to 21 match the 'HIGH' region motif; it reads PSPTGFIHLGN. A compositionally biased stretch (basic and acidic residues) spans 114-131; sequence QREAGEKPRYDGTWRPEP. Positions 114-139 are disordered; the sequence is QREAGEKPRYDGTWRPEPGKVLPEPP. Residues 243-247 carry the 'KMSKS' region motif; sequence KMSKR. Lys246 is a binding site for ATP.

The protein belongs to the class-I aminoacyl-tRNA synthetase family. Glutamate--tRNA ligase type 1 subfamily. As to quaternary structure, monomer.

It is found in the cytoplasm. The catalysed reaction is tRNA(Glu) + L-glutamate + ATP = L-glutamyl-tRNA(Glu) + AMP + diphosphate. Its function is as follows. Catalyzes the attachment of glutamate to tRNA(Glu) in a two-step reaction: glutamate is first activated by ATP to form Glu-AMP and then transferred to the acceptor end of tRNA(Glu). This Paraburkholderia xenovorans (strain LB400) protein is Glutamate--tRNA ligase.